A 365-amino-acid chain; its full sequence is Pyruvate dehydrogenase E1 component subunit beta, mitochondrial (365 aa).

Residues 1-24 constitute a mitochondrion transit peptide; the sequence is MLRTRLIQAASSAQRAFSTSQKAL. Glutamate 85 is a thiamine diphosphate binding site. Residues isoleucine 138, alanine 186, isoleucine 187, and aspartate 189 each coordinate K(+).

The cofactor is thiamine diphosphate. As to expression, expressed in salivary glands (at protein level).

It localises to the mitochondrion matrix. The catalysed reaction is N(6)-[(R)-lipoyl]-L-lysyl-[protein] + pyruvate + H(+) = N(6)-[(R)-S(8)-acetyldihydrolipoyl]-L-lysyl-[protein] + CO2. In terms of biological role, the pyruvate dehydrogenase complex catalyzes the overall conversion of pyruvate to acetyl-CoA and CO(2). Might play a role in regulating synapse structure formation at neuromuscular junctions. Might play a role in maintenance of mitochondrial morphology. The protein is Pyruvate dehydrogenase E1 component subunit beta, mitochondrial of Drosophila melanogaster (Fruit fly).